Reading from the N-terminus, the 490-residue chain is Probable cytosol aminopeptidase (490 aa).

Residues K262 and D267 each contribute to the Mn(2+) site. Residue K274 is part of the active site. Mn(2+) is bound by residues D285, D344, and E346. R348 is a catalytic residue.

Belongs to the peptidase M17 family. It depends on Mn(2+) as a cofactor.

The protein localises to the cytoplasm. It catalyses the reaction Release of an N-terminal amino acid, Xaa-|-Yaa-, in which Xaa is preferably Leu, but may be other amino acids including Pro although not Arg or Lys, and Yaa may be Pro. Amino acid amides and methyl esters are also readily hydrolyzed, but rates on arylamides are exceedingly low.. The catalysed reaction is Release of an N-terminal amino acid, preferentially leucine, but not glutamic or aspartic acids.. Presumably involved in the processing and regular turnover of intracellular proteins. Catalyzes the removal of unsubstituted N-terminal amino acids from various peptides. This chain is Probable cytosol aminopeptidase, found in Mannheimia succiniciproducens (strain KCTC 0769BP / MBEL55E).